The following is a 380-amino-acid chain: DNA replication and repair protein RecF (380 aa).

30-37 (GNNAQGKS) provides a ligand contact to ATP.

The protein belongs to the RecF family.

Its subcellular location is the cytoplasm. Functionally, the RecF protein is involved in DNA metabolism; it is required for DNA replication and normal SOS inducibility. RecF binds preferentially to single-stranded, linear DNA. It also seems to bind ATP. This chain is DNA replication and repair protein RecF, found in Crocosphaera subtropica (strain ATCC 51142 / BH68) (Cyanothece sp. (strain ATCC 51142)).